The chain runs to 313 residues: MSSREIRIATRKSALALWQAEYVKARLEAAHPGLLVTLVPMVSRGDKLLDSPLSKIGGKGLFVKELETALLENEADIAVHSMKDVPMDFPEGLGLFCICEREDPRDAFVSNTYSSLDALPAGSIVGTSSLRRQAQLLTRRPDLEIRFLRGNVNTRLAKLDAGEYDAIILAAAGLIRLGFEDRITSAISVDDSLPAGGQGAVGIECRSADTEIHALLAPLHHADTADRVTAERALNKHLNGGCQVPIACYAVLEGDQLWLRGLVGEPSGGKLLNAQARAPRAAAETLGVQVAEDLLSQGADDILKAVYGEAGHE.

An S-(dipyrrolylmethanemethyl)cysteine modification is found at cysteine 242.

Belongs to the HMBS family. In terms of assembly, monomer. It depends on dipyrromethane as a cofactor.

The catalysed reaction is 4 porphobilinogen + H2O = hydroxymethylbilane + 4 NH4(+). It participates in porphyrin-containing compound metabolism; protoporphyrin-IX biosynthesis; coproporphyrinogen-III from 5-aminolevulinate: step 2/4. Tetrapolymerization of the monopyrrole PBG into the hydroxymethylbilane pre-uroporphyrinogen in several discrete steps. In Pseudomonas fluorescens (strain Pf0-1), this protein is Porphobilinogen deaminase.